A 455-amino-acid chain; its full sequence is Argininosuccinate lyase (455 aa).

It belongs to the lyase 1 family. Argininosuccinate lyase subfamily.

The protein resides in the cytoplasm. The enzyme catalyses 2-(N(omega)-L-arginino)succinate = fumarate + L-arginine. It functions in the pathway amino-acid biosynthesis; L-arginine biosynthesis; L-arginine from L-ornithine and carbamoyl phosphate: step 3/3. The sequence is that of Argininosuccinate lyase from Shewanella oneidensis (strain ATCC 700550 / JCM 31522 / CIP 106686 / LMG 19005 / NCIMB 14063 / MR-1).